The following is an 88-amino-acid chain: UPF0297 protein BPUM_2379 (88 aa).

It belongs to the UPF0297 family.

This Bacillus pumilus (strain SAFR-032) protein is UPF0297 protein BPUM_2379.